The chain runs to 452 residues: Coiled-coil domain-containing protein 71 (452 aa).

Residues 81-106 (PSQTKLQARAPTPAATSPPASAPQTA) form a disordered region. Over residues 87–106 (QARAPTPAATSPPASAPQTA) the composition is skewed to low complexity. S129 carries the post-translational modification Phosphoserine. Disordered stretches follow at residues 209–256 (PLKV…GLQS) and 322–404 (AREV…LGPG). Residues 279–344 (KAAQAKAACA…QAKAKVARTQ (66 aa)) are a coiled coil. The span at 332–344 (KAVQAKAKVARTQ) shows a compositional bias: low complexity. Basic and acidic residues predominate over residues 377 to 386 (RTEEAKDLSP).

The chain is Coiled-coil domain-containing protein 71 (CCDC71) from Bos taurus (Bovine).